Here is a 456-residue protein sequence, read N- to C-terminus: Histidine--tRNA ligase (456 aa).

This sequence belongs to the class-II aminoacyl-tRNA synthetase family. As to quaternary structure, homodimer.

The protein localises to the cytoplasm. The catalysed reaction is tRNA(His) + L-histidine + ATP = L-histidyl-tRNA(His) + AMP + diphosphate + H(+). The polypeptide is Histidine--tRNA ligase (Borreliella afzelii (strain PKo) (Borrelia afzelii)).